The sequence spans 142 residues: Transcriptional regulator MraZ (142 aa).

SpoVT-AbrB domains follow at residues 5–51 (ASAL…PRPE) and 77–120 (AADV…DAAT).

This sequence belongs to the MraZ family. As to quaternary structure, forms oligomers.

The protein localises to the cytoplasm. It localises to the nucleoid. The chain is Transcriptional regulator MraZ from Cupriavidus taiwanensis (strain DSM 17343 / BCRC 17206 / CCUG 44338 / CIP 107171 / LMG 19424 / R1) (Ralstonia taiwanensis (strain LMG 19424)).